A 496-amino-acid chain; its full sequence is Myotilin (496 aa).

The segment at 1–37 (MFNYERPKHFIQPQNPCGSRLQPPGPEVSGFPSQTKQ) is disordered. Omega-N-methylarginine is present on Arg-20. Residues 78 to 149 (PNPGQKVTAT…PTPKTPDHEI (72 aa)) form a necessary for interaction with ACTN1 region. 2 stretches are compositionally biased toward polar residues: residues 202–213 (NSDVQDSPQHNP) and 221–233 (PTSQVRSRSSSRA). The interval 202-239 (NSDVQDSPQHNPEQARLHVPTSQVRSRSSSRAEANDQD) is disordered. A necessary for interaction with FLNC region spans residues 213–491 (PEQARLHVPT…QRLAAQSGLY (279 aa)). A necessary for interaction with ACTA1 region spans residues 213–496 (PEQARLHVPT…QSGLYESEEL (284 aa)). Ig-like C2-type domains follow at residues 248–333 (PRFI…ATFT) and 347–439 (PMFI…LDVT).

It belongs to the myotilin/palladin family. In terms of assembly, homodimer. Interacts with ACTA1, ACTN1, FLNA, FLNB, FLNC, and MYOZ2. Interacts with the C-terminal region of MYOZ1. In terms of tissue distribution, expressed in skeletal muscle (at protein level).

The protein resides in the cell membrane. Its subcellular location is the sarcolemma. It localises to the cytoplasm. It is found in the cytoskeleton. The protein localises to the myofibril. The protein resides in the sarcomere. Its subcellular location is the z line. Functionally, component of a complex of multiple actin cross-linking proteins. Involved in the control of myofibril assembly and stability at the Z lines in muscle cells. This Mus musculus (Mouse) protein is Myotilin (Myot).